A 1412-amino-acid chain; its full sequence is DNA-directed RNA polymerase subunit beta' (1412 aa).

Zn(2+) contacts are provided by Cys70, Cys72, Cys85, and Cys88. Residues Asp460, Asp462, and Asp464 each coordinate Mg(2+). Cys819, Cys893, Cys900, and Cys903 together coordinate Zn(2+). Positions 1391 to 1412 (AEESFEFGTPETPAAEQQHSGE) are disordered.

This sequence belongs to the RNA polymerase beta' chain family. The RNAP catalytic core consists of 2 alpha, 1 beta, 1 beta' and 1 omega subunit. When a sigma factor is associated with the core the holoenzyme is formed, which can initiate transcription. Requires Mg(2+) as cofactor. It depends on Zn(2+) as a cofactor.

It catalyses the reaction RNA(n) + a ribonucleoside 5'-triphosphate = RNA(n+1) + diphosphate. Functionally, DNA-dependent RNA polymerase catalyzes the transcription of DNA into RNA using the four ribonucleoside triphosphates as substrates. This chain is DNA-directed RNA polymerase subunit beta', found in Paraburkholderia phytofirmans (strain DSM 17436 / LMG 22146 / PsJN) (Burkholderia phytofirmans).